We begin with the raw amino-acid sequence, 1435 residues long: Gag-Pol polyprotein (1435 aa).

G2 carries N-myristoyl glycine; by host lipidation. Residues 7–31 form an interaction with Gp41 region; sequence VLSGGKLDSWEKIRLRPGGRKKYKL. The interaction with host CALM1 stretch occupies residues 8–43; the sequence is LSGGKLDSWEKIRLRPGGRKKYKLKHIVWASRELGR. Residues 12 to 19 are interaction with host AP3D1; it reads KLDSWEKI. The interaction with membrane phosphatidylinositol 4,5-bisphosphate and RNA stretch occupies residues 14-33; it reads DSWEKIRLRPGGRKKYKLKH. A Nuclear export signal motif is present at residues 16 to 22; sequence WEKIRLR. Residues 26–32 carry the Nuclear localization signal motif; that stretch reads RKKYKLK. Positions 72-76 are interaction with membrane phosphatidylinositol 4,5-bisphosphate; the sequence is EELRS. The disordered stretch occupies residues 107-126; sequence QKNSQQEIQQAAKNEGNSNP. Residues 108–126 show a composition bias toward polar residues; the sequence is KNSQQEIQQAAKNEGNSNP. The residue at position 131 (Y131) is a Phosphotyrosine; by host. The tract at residues 188 to 226 is interaction with human PPIA/CYPA and NUP153; sequence NTVGGHQAAMQMLKDTINDEAAEWDRIHPQQAGPIPPGQ. The interval 276-362 is dimerization/Multimerization of capsid protein p24; that stretch reads YSPVSILDIR…GGPSHKARVL (87 aa). CCHC-type zinc fingers lie at residues 391–408 and 412–429; these read IKCF…NCRA and KGCW…ECTE. The interval 444-478 is disordered; the sequence is GEARKLSPEQDRANSPTSRELRIRRGDSPLPEAGA. Over residues 445-455 the composition is skewed to basic and acidic residues; the sequence is EARKLSPEQDR. The tract at residues 489–493 is dimerization of protease; that stretch reads PQITL. In terms of domain architecture, Peptidase A2 spans 508 to 577; the sequence is IEALLDTGAD…TPINIIGRNM (70 aa). D513 acts as the For protease activity; shared with dimeric partner in catalysis. Dimerization of protease regions lie at residues 537–543 and 576–588; these read GIGGFIK and NMLT…LNFP. In terms of domain architecture, Reverse transcriptase spans 631–821; that stretch reads EGKISKIGPE…PPFLWMGYEL (191 aa). 3 residues coordinate Mg(2+): D697, D772, and D773. Residues 814–822 form an RT 'primer grip' region; it reads FLWMGYELH. Positions 985–1001 match the Tryptophan repeat motif motif; it reads WEVWWTEYWQAAWIPEW. The region spanning 1021–1144 is the RNase H type-1 domain; the sequence is IPGAETYYVD…VDKLVSSGIR (124 aa). The Mg(2+) site is built by D1030, E1065, D1085, and D1136. The segment at 1150-1191 adopts an Integrase-type zinc-finger fold; it reads DGIDKAQEEHERYHSNWRAMASDFNLPPVVAKEIVASCDKCQ. Residues H1159, H1163, C1187, and C1190 each contribute to the Zn(2+) site. Positions 1201–1351 constitute an Integrase catalytic domain; that stretch reads VDCSPGIWQL…SAGERIIDII (151 aa). Mg(2+) contacts are provided by D1211, D1263, and E1299. A DNA-binding region (integrase-type) is located at residues 1370–1417; it reads FRVYYRDSRDPIWKGPAKLLWKGEGAVVIQDNNEIKVVPRRKAKILKD.

As to quaternary structure, homotrimer; further assembles as hexamers of trimers. Interacts with gp41 (via C-terminus). Interacts with host CALM1; this interaction induces a conformational change in the Matrix protein, triggering exposure of the myristate group. Interacts with host AP3D1; this interaction allows the polyprotein trafficking to multivesicular bodies during virus assembly. Part of the pre-integration complex (PIC) which is composed of viral genome, matrix protein, Vpr and integrase. Homodimer; the homodimer further multimerizes as homohexamers or homopentamers. Interacts with human PPIA/CYPA; This interaction stabilizes the capsid. Interacts with human NUP153. Interacts with host PDZD8; this interaction stabilizes the capsid. Interacts with monkey TRIM5; this interaction destabilizes the capsid. In terms of assembly, homodimer, whose active site consists of two apposed aspartic acid residues. As to quaternary structure, heterodimer of p66 RT and p51 RT (RT p66/p51). Heterodimerization of RT is essential for DNA polymerase activity. The overall folding of the subdomains is similar in p66 RT and p51 RT but the spatial arrangements of the subdomains are dramatically different. Homotetramer; may further associate as a homohexadecamer. Part of the pre-integration complex (PIC) which is composed of viral genome, matrix protein, Vpr and integrase. Interacts with human SMARCB1/INI1 and human PSIP1/LEDGF isoform 1. Interacts with human KPNA3; this interaction might play a role in nuclear import of the pre-integration complex. Interacts with human NUP153; this interaction might play a role in nuclear import of the pre-integration complex. The cofactor is Mg(2+). Post-translationally, specific enzymatic cleavages by the viral protease yield mature proteins. The protease is released by autocatalytic cleavage. The polyprotein is cleaved during and after budding, this process is termed maturation. Proteolytic cleavage of p66 RT removes the RNase H domain to yield the p51 RT subunit. Nucleocapsid protein p7 might be further cleaved after virus entry. Tyrosine phosphorylated presumably in the virion by a host kinase. Phosphorylation is apparently not a major regulator of membrane association. In terms of processing, phosphorylated possibly by host MAPK1; this phosphorylation is necessary for Pin1-mediated virion uncoating. Post-translationally, methylated by host PRMT6, impairing its function by reducing RNA annealing and the initiation of reverse transcription.

It is found in the host cell membrane. Its subcellular location is the host endosome. The protein localises to the host multivesicular body. It localises to the virion membrane. The protein resides in the host nucleus. It is found in the host cytoplasm. Its subcellular location is the virion. It catalyses the reaction Specific for a P1 residue that is hydrophobic, and P1' variable, but often Pro.. It carries out the reaction Endohydrolysis of RNA in RNA/DNA hybrids. Three different cleavage modes: 1. sequence-specific internal cleavage of RNA. Human immunodeficiency virus type 1 and Moloney murine leukemia virus enzymes prefer to cleave the RNA strand one nucleotide away from the RNA-DNA junction. 2. RNA 5'-end directed cleavage 13-19 nucleotides from the RNA end. 3. DNA 3'-end directed cleavage 15-20 nucleotides away from the primer terminus.. The catalysed reaction is 3'-end directed exonucleolytic cleavage of viral RNA-DNA hybrid.. The enzyme catalyses DNA(n) + a 2'-deoxyribonucleoside 5'-triphosphate = DNA(n+1) + diphosphate. Its activity is regulated as follows. Protease: The viral protease is inhibited by many synthetic protease inhibitors (PIs), such as amprenavir, atazanavir, indinavir, loprinavir, nelfinavir, ritonavir and saquinavir. Use of protease inhibitors in tritherapy regimens permit more ambitious therapeutic strategies. Reverse transcriptase/ribonuclease H: RT can be inhibited either by nucleoside RT inhibitors (NRTIs) or by non nucleoside RT inhibitors (NNRTIs). NRTIs act as chain terminators, whereas NNRTIs inhibit DNA polymerization by binding a small hydrophobic pocket near the RT active site and inducing an allosteric change in this region. Classical NRTIs are abacavir, adefovir (PMEA), didanosine (ddI), lamivudine (3TC), stavudine (d4T), tenofovir (PMPA), zalcitabine (ddC), and zidovudine (AZT). Classical NNRTIs are atevirdine (BHAP U-87201E), delavirdine, efavirenz (DMP-266), emivirine (I-EBU), and nevirapine (BI-RG-587). The tritherapies used as a basic effective treatment of AIDS associate two NRTIs and one NNRTI. Mediates, with Gag polyprotein, the essential events in virion assembly, including binding the plasma membrane, making the protein-protein interactions necessary to create spherical particles, recruiting the viral Env proteins, and packaging the genomic RNA via direct interactions with the RNA packaging sequence (Psi). Gag-Pol polyprotein may regulate its own translation, by the binding genomic RNA in the 5'-UTR. At low concentration, the polyprotein would promote translation, whereas at high concentration, the polyprotein would encapsidate genomic RNA and then shut off translation. Its function is as follows. Targets the polyprotein to the plasma membrane via a multipartite membrane-binding signal, that includes its myristoylated N-terminus. Matrix protein is part of the pre-integration complex. Implicated in the release from host cell mediated by Vpu. Binds to RNA. In terms of biological role, forms the conical core that encapsulates the genomic RNA-nucleocapsid complex in the virion. Most core are conical, with only 7% tubular. The core is constituted by capsid protein hexamer subunits. The core is disassembled soon after virion entry. Host restriction factors such as TRIM5-alpha or TRIMCyp bind retroviral capsids and cause premature capsid disassembly, leading to blocks in reverse transcription. Capsid restriction by TRIM5 is one of the factors which restricts HIV-1 to the human species. Host PIN1 apparently facilitates the virion uncoating. On the other hand, interactions with PDZD8 or CYPA stabilize the capsid. Functionally, encapsulates and protects viral dimeric unspliced genomic RNA (gRNA). Binds these RNAs through its zinc fingers. Acts as a nucleic acid chaperone which is involved in rearangement of nucleic acid secondary structure during gRNA retrotranscription. Also facilitates template switch leading to recombination. As part of the polyprotein, participates in gRNA dimerization, packaging, tRNA incorporation and virion assembly. Aspartyl protease that mediates proteolytic cleavages of Gag and Gag-Pol polyproteins during or shortly after the release of the virion from the plasma membrane. Cleavages take place as an ordered, step-wise cascade to yield mature proteins. This process is called maturation. Displays maximal activity during the budding process just prior to particle release from the cell. Also cleaves Nef and Vif, probably concomitantly with viral structural proteins on maturation of virus particles. Hydrolyzes host EIF4GI and PABP1 in order to shut off the capped cellular mRNA translation. The resulting inhibition of cellular protein synthesis serves to ensure maximal viral gene expression and to evade host immune response. Also mediates cleavage of host YTHDF3. Mediates cleavage of host CARD8, thereby activating the CARD8 inflammasome, leading to the clearance of latent HIV-1 in patient CD4(+) T-cells after viral reactivation; in contrast, HIV-1 can evade CARD8-sensing when its protease remains inactive in infected cells prior to viral budding. Its function is as follows. Multifunctional enzyme that converts the viral RNA genome into dsDNA in the cytoplasm, shortly after virus entry into the cell. This enzyme displays a DNA polymerase activity that can copy either DNA or RNA templates, and a ribonuclease H (RNase H) activity that cleaves the RNA strand of RNA-DNA heteroduplexes in a partially processive 3' to 5' endonucleasic mode. Conversion of viral genomic RNA into dsDNA requires many steps. A tRNA(3)-Lys binds to the primer-binding site (PBS) situated at the 5'-end of the viral RNA. RT uses the 3' end of the tRNA primer to perform a short round of RNA-dependent minus-strand DNA synthesis. The reading proceeds through the U5 region and ends after the repeated (R) region which is present at both ends of viral RNA. The portion of the RNA-DNA heteroduplex is digested by the RNase H, resulting in a ssDNA product attached to the tRNA primer. This ssDNA/tRNA hybridizes with the identical R region situated at the 3' end of viral RNA. This template exchange, known as minus-strand DNA strong stop transfer, can be either intra- or intermolecular. RT uses the 3' end of this newly synthesized short ssDNA to perform the RNA-dependent minus-strand DNA synthesis of the whole template. RNase H digests the RNA template except for two polypurine tracts (PPTs) situated at the 5'-end and near the center of the genome. It is not clear if both polymerase and RNase H activities are simultaneous. RNase H probably can proceed both in a polymerase-dependent (RNA cut into small fragments by the same RT performing DNA synthesis) and a polymerase-independent mode (cleavage of remaining RNA fragments by free RTs). Secondly, RT performs DNA-directed plus-strand DNA synthesis using the PPTs that have not been removed by RNase H as primers. PPTs and tRNA primers are then removed by RNase H. The 3' and 5' ssDNA PBS regions hybridize to form a circular dsDNA intermediate. Strand displacement synthesis by RT to the PBS and PPT ends produces a blunt ended, linear dsDNA copy of the viral genome that includes long terminal repeats (LTRs) at both ends. In terms of biological role, catalyzes viral DNA integration into the host chromosome, by performing a series of DNA cutting and joining reactions. This enzyme activity takes place after virion entry into a cell and reverse transcription of the RNA genome in dsDNA. The first step in the integration process is 3' processing. This step requires a complex comprising the viral genome, matrix protein, Vpr and integrase. This complex is called the pre-integration complex (PIC). The integrase protein removes 2 nucleotides from each 3' end of the viral DNA, leaving recessed CA OH's at the 3' ends. In the second step, the PIC enters cell nucleus. This process is mediated through integrase and Vpr proteins, and allows the virus to infect a non dividing cell. This ability to enter the nucleus is specific of lentiviruses, other retroviruses cannot and rely on cell division to access cell chromosomes. In the third step, termed strand transfer, the integrase protein joins the previously processed 3' ends to the 5' ends of strands of target cellular DNA at the site of integration. The 5'-ends are produced by integrase-catalyzed staggered cuts, 5 bp apart. A Y-shaped, gapped, recombination intermediate results, with the 5'-ends of the viral DNA strands and the 3' ends of target DNA strands remaining unjoined, flanking a gap of 5 bp. The last step is viral DNA integration into host chromosome. This involves host DNA repair synthesis in which the 5 bp gaps between the unjoined strands are filled in and then ligated. Since this process occurs at both cuts flanking the HIV genome, a 5 bp duplication of host DNA is produced at the ends of HIV-1 integration. Alternatively, Integrase may catalyze the excision of viral DNA just after strand transfer, this is termed disintegration. The polypeptide is Gag-Pol polyprotein (gag-pol) (Human immunodeficiency virus type 1 group M subtype G (isolate 92NG083) (HIV-1)).